We begin with the raw amino-acid sequence, 122 residues long: Ribosome-binding factor A (122 aa).

The protein belongs to the RbfA family. As to quaternary structure, monomer. Binds 30S ribosomal subunits, but not 50S ribosomal subunits or 70S ribosomes.

It is found in the cytoplasm. One of several proteins that assist in the late maturation steps of the functional core of the 30S ribosomal subunit. Associates with free 30S ribosomal subunits (but not with 30S subunits that are part of 70S ribosomes or polysomes). Required for efficient processing of 16S rRNA. May interact with the 5'-terminal helix region of 16S rRNA. This chain is Ribosome-binding factor A, found in Prosthecochloris aestuarii (strain DSM 271 / SK 413).